The chain runs to 173 residues: NADH-ubiquinone oxidoreductase chain 6 (173 aa).

Transmembrane regions (helical) follow at residues 1–21 (MTYF…AVAS), 27–47 (YGVV…LSLG), 48–68 (VSFV…VVFV), 87–107 (VVGY…VGGF), and 139–159 (CGVG…FVVL).

This sequence belongs to the complex I subunit 6 family.

The protein resides in the mitochondrion membrane. It catalyses the reaction a ubiquinone + NADH + 5 H(+)(in) = a ubiquinol + NAD(+) + 4 H(+)(out). Its function is as follows. Core subunit of the mitochondrial membrane respiratory chain NADH dehydrogenase (Complex I) that is believed to belong to the minimal assembly required for catalysis. Complex I functions in the transfer of electrons from NADH to the respiratory chain. The immediate electron acceptor for the enzyme is believed to be ubiquinone. This is NADH-ubiquinone oxidoreductase chain 6 (MT-ND6) from Ptychoramphus aleuticus (Cassin's auklet).